Reading from the N-terminus, the 460-residue chain is Argininosuccinate lyase (460 aa).

The protein belongs to the lyase 1 family. Argininosuccinate lyase subfamily.

The protein resides in the cytoplasm. The enzyme catalyses 2-(N(omega)-L-arginino)succinate = fumarate + L-arginine. The protein operates within amino-acid biosynthesis; L-arginine biosynthesis; L-arginine from L-ornithine and carbamoyl phosphate: step 3/3. This Oleidesulfovibrio alaskensis (strain ATCC BAA-1058 / DSM 17464 / G20) (Desulfovibrio alaskensis) protein is Argininosuccinate lyase.